We begin with the raw amino-acid sequence, 336 residues long: Phospho-N-acetylmuramoyl-pentapeptide-transferase (336 aa).

10 helical membrane passes run 1–21, 56–76, 78–98, 124–144, 148–168, 184–204, 210–230, 239–259, 264–284, and 314–334; these read MLPL…SLFL, IPTA…LLLF, IQLW…ALGW, CLAA…FLSF, FLGI…FAIA, GLDG…LVVA, PWAF…LGFL, VFMG…CAVL, FLLL…IVQV, and VVRN…IAVF.

This sequence belongs to the glycosyltransferase 4 family. MraY subfamily. The cofactor is Mg(2+).

The protein localises to the cell inner membrane. It catalyses the reaction UDP-N-acetyl-alpha-D-muramoyl-L-alanyl-gamma-D-glutamyl-meso-2,6-diaminopimeloyl-D-alanyl-D-alanine + di-trans,octa-cis-undecaprenyl phosphate = di-trans,octa-cis-undecaprenyl diphospho-N-acetyl-alpha-D-muramoyl-L-alanyl-D-glutamyl-meso-2,6-diaminopimeloyl-D-alanyl-D-alanine + UMP. It participates in cell wall biogenesis; peptidoglycan biosynthesis. Catalyzes the initial step of the lipid cycle reactions in the biosynthesis of the cell wall peptidoglycan: transfers peptidoglycan precursor phospho-MurNAc-pentapeptide from UDP-MurNAc-pentapeptide onto the lipid carrier undecaprenyl phosphate, yielding undecaprenyl-pyrophosphoryl-MurNAc-pentapeptide, known as lipid I. The chain is Phospho-N-acetylmuramoyl-pentapeptide-transferase from Chlamydia trachomatis serovar L2b (strain UCH-1/proctitis).